A 271-amino-acid chain; its full sequence is Dermonecrotic toxin LhSicTox-alphaIA2aiv (271 aa).

His3 is an active-site residue. Residues Glu23 and Asp25 each contribute to the Mg(2+) site. His39 functions as the Nucleophile in the catalytic mechanism. Disulfide bonds link Cys43-Cys49 and Cys45-Cys188. Asp83 contributes to the Mg(2+) binding site.

Belongs to the arthropod phospholipase D family. Class II subfamily. The cofactor is Mg(2+). As to expression, expressed by the venom gland.

It is found in the secreted. The catalysed reaction is an N-(acyl)-sphingosylphosphocholine = an N-(acyl)-sphingosyl-1,3-cyclic phosphate + choline. It carries out the reaction an N-(acyl)-sphingosylphosphoethanolamine = an N-(acyl)-sphingosyl-1,3-cyclic phosphate + ethanolamine. The enzyme catalyses a 1-acyl-sn-glycero-3-phosphocholine = a 1-acyl-sn-glycero-2,3-cyclic phosphate + choline. It catalyses the reaction a 1-acyl-sn-glycero-3-phosphoethanolamine = a 1-acyl-sn-glycero-2,3-cyclic phosphate + ethanolamine. In terms of biological role, dermonecrotic toxins cleave the phosphodiester linkage between the phosphate and headgroup of certain phospholipids (sphingolipid and lysolipid substrates), forming an alcohol (often choline) and a cyclic phosphate. This toxin acts on sphingomyelin (SM). It may also act on ceramide phosphoethanolamine (CPE), lysophosphatidylcholine (LPC) and lysophosphatidylethanolamine (LPE), but not on lysophosphatidylserine (LPS), and lysophosphatidylglycerol (LPG). It acts by transphosphatidylation, releasing exclusively cyclic phosphate products as second products. Induces dermonecrosis, hemolysis, increased vascular permeability, edema, inflammatory response, and platelet aggregation. The protein is Dermonecrotic toxin LhSicTox-alphaIA2aiv of Loxosceles hirsuta (Recluse spider).